Here is a 126-residue protein sequence, read N- to C-terminus: 13 kDa ribonucleoprotein-associated protein (126 aa).

This sequence belongs to the eukaryotic ribosomal protein eL8 family. Component of the U3 snoRNP particle. Binds to the C'/D and B/C motifs in U3 snoRNA. Component of the 25S U4/U6.U5 tri-snRNP particle, a subcomplex of the spliceosome. Binds to the 5' stem-loop of U4 snRNA.

The protein localises to the nucleus. Its subcellular location is the nucleolus. Its function is as follows. Common component of the spliceosome and rRNA processing machinery. In association with the spliceosomal U4/U6.U5 tri-snRNP particle, required for splicing of pre-mRNA. In association with box C/D snoRNPs, required for processing of pre-ribosomal RNA (rRNA) and site-specific 2'-O-methylation of substrate RNAs. Essential for the accumulation and stability of U4 snRNA, U6 snRNA, and box C/D snoRNAs. In Debaryomyces hansenii (strain ATCC 36239 / CBS 767 / BCRC 21394 / JCM 1990 / NBRC 0083 / IGC 2968) (Yeast), this protein is 13 kDa ribonucleoprotein-associated protein (SNU13).